Reading from the N-terminus, the 469-residue chain is Cytosolic beta-glucosidase (469 aa).

The substrate site is built by glutamine 17, histidine 120, and asparagine 164. Glutamate 165 (proton donor) is an active-site residue. Tyrosine 309 serves as a coordination point for substrate. The Nucleophile role is filled by glutamate 373. Substrate-binding positions include tryptophan 417 and 424–425; that span reads EW.

This sequence belongs to the glycosyl hydrolase 1 family. Klotho subfamily. In terms of assembly, may interact with NEU2. In terms of processing, the N-terminus is blocked. In terms of tissue distribution, present in small intestine (at protein level). Expressed in liver, small intestine, colon, spleen and kidney. Down-regulated in renal cell carcinomas and hepatocellular carcinomas.

The protein resides in the cytoplasm. It localises to the cytosol. It carries out the reaction Hydrolysis of terminal, non-reducing beta-D-glucosyl residues with release of beta-D-glucose.. It catalyses the reaction a beta-D-glucosyl-(1&lt;-&gt;1')-N-acylsphing-4-enine + H2O = an N-acylsphing-4-enine + D-glucose. The catalysed reaction is a beta-D-galactosyl-(1&lt;-&gt;1')-N-acylsphing-4-enine + H2O = an N-acylsphing-4-enine + D-galactose. The enzyme catalyses beta-D-glucosyl-(1&lt;-&gt;1)-sphing-4-enine + H2O = sphing-4-enine + D-glucose. It carries out the reaction beta-D-glucosyl-(1&lt;-&gt;1)-N-octadecanoylsphing-4-enine + H2O = N-octadecanoylsphing-4-enine + D-glucose. It catalyses the reaction beta-D-galactosyl-(1&lt;-&gt;1)-sphing-4-enine + H2O = sphing-4-enine + D-galactose. The catalysed reaction is beta-D-galactosyl-(1&lt;-&gt;1')-N-octadecanoylsphing-4-enine + H2O = N-octadecanoylsphing-4-enine + D-galactose. The enzyme catalyses a beta-D-xylosyl-(1&lt;-&gt;1')-N-acylsphing-4-enine + cholesterol = cholesteryl 3-beta-D-xyloside + an N-acylsphing-4-enine. Inhibited by 2,4-dinitrophenyl-2-fluoro-2-deoxy-beta-D-glucopyranoside. Inhibited by sodium taurocholate. Inhibited by alpha-1-C-nonyl-DIX/AnDIX. The glucosylceramidase activity is slightly inhibited by conduritol B epoxide/CBE while the galactosylceramidase activity is not. Its function is as follows. Neutral cytosolic beta-glycosidase with a broad substrate specificity that could play a role in the catabolism of glycosylceramides. Has a significant glucosylceramidase activity in vitro. However, that activity is relatively low and its significance in vivo is not clear. Hydrolyzes galactosylceramides/GalCers, glucosylsphingosines/GlcSphs and galactosylsphingosines/GalSphs. However, the in vivo relevance of these activities is unclear. It can also hydrolyze a broad variety of dietary glycosides including phytoestrogens, flavonols, flavones, flavanones and cyanogens in vitro and could therefore play a role in the metabolism of xenobiotics. Possesses transxylosylase activity in vitro using xylosylated ceramides/XylCers (such as beta-D-xylosyl-(1&lt;-&gt;1')-N-acylsphing-4-enine) as xylosyl donors and cholesterol as acceptor. Could also play a role in the catabolism of cytosolic sialyl free N-glycans. The chain is Cytosolic beta-glucosidase from Homo sapiens (Human).